The primary structure comprises 124 residues: Small ribosomal subunit protein uS12 (124 aa).

D89 bears the 3-methylthioaspartic acid mark.

It belongs to the universal ribosomal protein uS12 family. Part of the 30S ribosomal subunit. Contacts proteins S8 and S17. May interact with IF1 in the 30S initiation complex.

Its function is as follows. With S4 and S5 plays an important role in translational accuracy. In terms of biological role, interacts with and stabilizes bases of the 16S rRNA that are involved in tRNA selection in the A site and with the mRNA backbone. Located at the interface of the 30S and 50S subunits, it traverses the body of the 30S subunit contacting proteins on the other side and probably holding the rRNA structure together. The combined cluster of proteins S8, S12 and S17 appears to hold together the shoulder and platform of the 30S subunit. The chain is Small ribosomal subunit protein uS12 from Acinetobacter baylyi (strain ATCC 33305 / BD413 / ADP1).